A 596-amino-acid chain; its full sequence is Elongation factor 4 (596 aa).

Residues 2-184 (SHIRNFSIIA…RLVHTIPAPE (183 aa)) enclose the tr-type G domain. Residues 14-19 (DHGKST) and 131-134 (NKMD) contribute to the GTP site.

The protein belongs to the TRAFAC class translation factor GTPase superfamily. Classic translation factor GTPase family. LepA subfamily.

The protein localises to the cell inner membrane. The catalysed reaction is GTP + H2O = GDP + phosphate + H(+). Its function is as follows. Required for accurate and efficient protein synthesis under certain stress conditions. May act as a fidelity factor of the translation reaction, by catalyzing a one-codon backward translocation of tRNAs on improperly translocated ribosomes. Back-translocation proceeds from a post-translocation (POST) complex to a pre-translocation (PRE) complex, thus giving elongation factor G a second chance to translocate the tRNAs correctly. Binds to ribosomes in a GTP-dependent manner. This Pseudomonas putida (strain GB-1) protein is Elongation factor 4.